The sequence spans 291 residues: Small ribosomal subunit protein uS2 (291 aa).

The tract at residues 231–291 (NRGSGTTEAP…AAEAPAEDAK (61 aa)) is disordered. The span at 246-259 (EWERELLEGSKAEE) shows a compositional bias: basic and acidic residues. Residues 260-285 (AAAAAPAENAEAPAAPAAEAPAAAEA) show a composition bias toward low complexity.

The protein belongs to the universal ribosomal protein uS2 family.

In Pseudarthrobacter chlorophenolicus (strain ATCC 700700 / DSM 12829 / CIP 107037 / JCM 12360 / KCTC 9906 / NCIMB 13794 / A6) (Arthrobacter chlorophenolicus), this protein is Small ribosomal subunit protein uS2.